The sequence spans 269 residues: MGNHQAVKKLWVINNFSFLDSDRVYSDIFVVGGCKWCLLALPEGNNNYIYDYFSLYLCVPDSEYLPSGWRRRAKVSFTMVNQVTGELSQQQEGVYWFDEKNTTQGFGSMFRLLVFQSSYKGFLVNGEVDIVAEVDVVEVIGKLDVSEESESIDSNGFDVLASQVESVNSLFGKYPCFASKLCPKTPRLKKNVVQSLNEILCKSTKELSNGDLAEAYSALRFVTKAGFKLDWLEKKLKETGKSRLQEIEEDLKDLKVKCADMDALLEFLR.

In terms of domain architecture, MATH spans alanine 6–valine 134. Positions lysine 228–arginine 269 form a coiled coil.

The polypeptide is MATH domain and coiled-coil domain-containing protein At2g01790 (Arabidopsis thaliana (Mouse-ear cress)).